The sequence spans 649 residues: Endoplasmic reticulum membrane protein 65 (649 aa).

The interval 1 to 55 (MGSNTSPGQADPLESENESSLTSRFLPNKRDGGKDNESVIPEKEEPDLNEPVLAV) is disordered. Residues 1-165 (MGSNTSPGQA…LATPYAIEKT (165 aa)) lie on the Cytoplasmic side of the membrane. Positions 28 to 43 (NKRDGGKDNESVIPEK) are enriched in basic and acidic residues. Position 94 is a phosphoserine (S94). The helical transmembrane segment at 166 to 186 (FLFGWFVSVDSFLYIFTLFPI) threads the bilayer. The Lumenal segment spans residues 187–302 (RVLISFFTLS…NFWNPAGWMT (116 aa)). N215 carries N-linked (GlcNAc...) asparagine glycosylation. Residues 303-323 (FFYYFAISLAYMVLHTLVLLY) traverse the membrane as a helical segment. Over 324 to 366 (QIITLNVTVNSYSNAVLALLMSNQLVEIKGAVFKKFEKENLFQ) the chain is Cytoplasmic. A helical transmembrane segment spans residues 367 to 387 (LTCSDVVERFQITIMVIIIFL). At 388–414 (RNLAELYTTSSLDQPLLTFKRLKTLLA) the chain is on the lumenal side. Residues 415–435 (PFFWVIGSELFVDWLKHAFII) form a helical membrane-spanning segment. Topologically, residues 436 to 479 (KFNYIKPSIYSRFTDVLCHDYVASGAQLTQTVTGCSQQVARRMG) are cytoplasmic. A helical membrane pass occupies residues 480 to 500 (LPVLPLVCVFIRTSMQTWSMF). The Lumenal portion of the chain corresponds to 501–557 (RSTHSMKQEIAKSIGTIFPTKDNYVYYLPNKEANTYNAGKEASWETLLLSVVRGKSG). Residues 558 to 578 (IAFLFFMAIMLKLLLGKAILA) form a helical membrane-spanning segment. The Cytoplasmic portion of the chain corresponds to 579-649 (ITQSRYESMQ…RYAMHSKRIW (71 aa)).

Belongs to the TAPT1 family. As to quaternary structure, interacts with slp1.

It is found in the endoplasmic reticulum membrane. Its function is as follows. May be involved in membrane protein folding. This is Endoplasmic reticulum membrane protein 65 from Schizosaccharomyces pombe (strain 972 / ATCC 24843) (Fission yeast).